The chain runs to 632 residues: Phosphatidylinositol-3,5-bisphosphate 3-phosphatase MTMR8 (632 aa).

The Myotubularin phosphatase domain maps to 126–500; sequence GWELISVVND…LHFKFWCGMY (375 aa). Residues Asn-250, Asn-275, and Ile-276 each coordinate a 1,2-diacyl-sn-glycero-3-phospho-(1D-myo-inositol-3,5-bisphosphate). Asn-250, Asn-275, and Ile-276 together coordinate a 1,2-diacyl-sn-glycero-3-phospho-(1D-myo-inositol-3-phosphate). The Phosphocysteine intermediate role is filled by Cys-338. Ser-339, Asp-340, Gly-341, Trp-342, Asp-343, Arg-344, Lys-380, and Arg-384 together coordinate a 1,2-diacyl-sn-glycero-3-phospho-(1D-myo-inositol-3,5-bisphosphate). A 1,2-diacyl-sn-glycero-3-phospho-(1D-myo-inositol-3-phosphate) contacts are provided by Ser-339, Asp-340, Gly-341, Trp-342, Asp-343, and Arg-344. Phosphate-binding residues include Ser-339 and Asp-340. Residues Trp-342, Asp-343, and Arg-344 each contribute to the phosphate site. Arg-384 contributes to the a 1,2-diacyl-sn-glycero-3-phospho-(1D-myo-inositol-3-phosphate) binding site. The tract at residues 545 to 632 is disordered; the sequence is LPDPAGPINT…HSKEEVQESS (88 aa). Positions 602 to 632 are enriched in basic and acidic residues; sequence EPAANEHDLSSKDKPVFVETEHSKEEVQESS.

The protein belongs to the protein-tyrosine phosphatase family. Non-receptor class myotubularin subfamily. In terms of assembly, homodimer.

Its subcellular location is the nucleus envelope. It catalyses the reaction a 1,2-diacyl-sn-glycero-3-phospho-(1D-myo-inositol-3,5-bisphosphate) + H2O = a 1,2-diacyl-sn-glycero-3-phospho-(1D-myo-inositol-5-phosphate) + phosphate. It carries out the reaction a 1,2-diacyl-sn-glycero-3-phospho-(1D-myo-inositol-3-phosphate) + H2O = a 1,2-diacyl-sn-glycero-3-phospho-(1D-myo-inositol) + phosphate. The enzyme catalyses 1,2-dioctanoyl-sn-glycero-3-phospho-(1D-myo-inositol-3,5-bisphosphate) + H2O = 1,2-dioctanoyl-sn-glycero-3-phospho-(1D-myo-inositol-5-phosphate) + phosphate. In terms of biological role, lipid phosphatase that specifically dephosphorylates the D-3 position of phosphatidylinositol 3-phosphate and phosphatidylinositol 3,5-bisphosphate, generating phosphatidylinositol and phosphatidylinositol 5-phosphate. The chain is Phosphatidylinositol-3,5-bisphosphate 3-phosphatase MTMR8 (mtmr8) from Danio rerio (Zebrafish).